Here is a 232-residue protein sequence, read N- to C-terminus: Large ribosomal subunit protein uL1 (232 aa).

This sequence belongs to the universal ribosomal protein uL1 family. As to quaternary structure, part of the 50S ribosomal subunit.

Functionally, binds directly to 23S rRNA. The L1 stalk is quite mobile in the ribosome, and is involved in E site tRNA release. In terms of biological role, protein L1 is also a translational repressor protein, it controls the translation of the L11 operon by binding to its mRNA. This is Large ribosomal subunit protein uL1 from Paraburkholderia phytofirmans (strain DSM 17436 / LMG 22146 / PsJN) (Burkholderia phytofirmans).